The following is a 117-amino-acid chain: Glycine cleavage system H-like protein (117 aa).

Residues 21–103 (IVRLGLSSRM…ESEGWFVVLQ (83 aa)) enclose the Lipoyl-binding domain. N6-lipoyllysine is present on Lys-62.

Belongs to the GcvH family. The cofactor is (R)-lipoate.

The chain is Glycine cleavage system H-like protein from Chlamydia muridarum (strain MoPn / Nigg).